Here is a 427-residue protein sequence, read N- to C-terminus: Histidinol dehydrogenase (427 aa).

Positions 232, 254, and 257 each coordinate substrate. Residues Gln-254 and His-257 each coordinate Zn(2+). Residues Glu-322 and His-323 each act as proton acceptor in the active site. Substrate-binding residues include His-323, Asp-356, Glu-410, and His-415. Position 356 (Asp-356) interacts with Zn(2+). His-415 is a Zn(2+) binding site.

It belongs to the histidinol dehydrogenase family. Zn(2+) is required as a cofactor.

The enzyme catalyses L-histidinol + 2 NAD(+) + H2O = L-histidine + 2 NADH + 3 H(+). Its pathway is amino-acid biosynthesis; L-histidine biosynthesis; L-histidine from 5-phospho-alpha-D-ribose 1-diphosphate: step 9/9. In terms of biological role, catalyzes the sequential NAD-dependent oxidations of L-histidinol to L-histidinaldehyde and then to L-histidine. The chain is Histidinol dehydrogenase from Listeria innocua serovar 6a (strain ATCC BAA-680 / CLIP 11262).